Reading from the N-terminus, the 274-residue chain is 16S rRNA (guanine(1405)-N(7))-methyltransferase (274 aa).

S-adenosyl-L-methionine is bound by residues 102–108 (HISTRER), alanine 133, aspartate 156, 182–183 (DL), leucine 198, and glutamine 207.

This sequence belongs to the methyltransferase superfamily. Aminoglycoside resistance family.

The enzyme catalyses guanosine(1405) in 16S rRNA + S-adenosyl-L-methionine = N(7)-methylguanosine(1405) in 16S rRNA + S-adenosyl-L-homocysteine. Its function is as follows. Specifically methylates the N(7) position of guanine 1405 in 16S rRNA. Confers resistance to various aminoglycosides, including gentamicin, kanamycin and sisomicin. The polypeptide is 16S rRNA (guanine(1405)-N(7))-methyltransferase (sgm) (Micromonospora zionensis).